The sequence spans 256 residues: Enoyl-[acyl-carrier-protein] reductase [NADH] FabI (256 aa).

NAD(+) is bound by residues Gly13, 19 to 20, 66 to 67, and Ile94; these read SI and DV. Residue Ala97 participates in substrate binding. Residues Tyr147 and Tyr157 each act as proton acceptor in the active site. NAD(+) is bound by residues Lys164 and 193–197; that span reads IRTLS.

The protein belongs to the short-chain dehydrogenases/reductases (SDR) family. FabI subfamily. Homotetramer.

It catalyses the reaction a 2,3-saturated acyl-[ACP] + NAD(+) = a (2E)-enoyl-[ACP] + NADH + H(+). It participates in lipid metabolism; fatty acid biosynthesis. Functionally, catalyzes the reduction of a carbon-carbon double bond in an enoyl moiety that is covalently linked to an acyl carrier protein (ACP). Involved in the elongation cycle of fatty acid which are used in the lipid metabolism. In Bacillus cereus (strain ATCC 14579 / DSM 31 / CCUG 7414 / JCM 2152 / NBRC 15305 / NCIMB 9373 / NCTC 2599 / NRRL B-3711), this protein is Enoyl-[acyl-carrier-protein] reductase [NADH] FabI (fabI).